The primary structure comprises 161 residues: Phosphopantetheine adenylyltransferase (161 aa).

Residue S10 coordinates substrate. ATP-binding positions include 10-11 and H18; that span reads SF. Substrate-binding residues include K42, L74, and R88. Residues 88 to 89, E99, and 124 to 130 each bind ATP; these read RG and YSFLSSS.

This sequence belongs to the bacterial CoaD family. As to quaternary structure, homohexamer. The cofactor is Mg(2+).

It localises to the cytoplasm. It catalyses the reaction (R)-4'-phosphopantetheine + ATP + H(+) = 3'-dephospho-CoA + diphosphate. It functions in the pathway cofactor biosynthesis; coenzyme A biosynthesis; CoA from (R)-pantothenate: step 4/5. Its function is as follows. Reversibly transfers an adenylyl group from ATP to 4'-phosphopantetheine, yielding dephospho-CoA (dPCoA) and pyrophosphate. In Bacillus subtilis (strain 168), this protein is Phosphopantetheine adenylyltransferase.